An 880-amino-acid polypeptide reads, in one-letter code: Endoglucanase E-4 (880 aa).

A signal peptide spans 1-46 (MSVTEPPPRRRGRHSRARRFLTSLGATAALTAGMLGVPLATGTAHA). The active-site Nucleophile is Asp104. Residues His422, His427, Asp461, and Glu470 contribute to the active site. Residues 504–652 (PDGPEIFVEA…GVPVWGTAPE (149 aa)) form the CBM3 domain. The interval 647-688 (WGTAPEEGEEPGGGEGPGGGEEPGEDVTPPSAPGSPAVRDVT) is disordered. The 93-residue stretch at 678–770 (APGSPAVRDV…TVSFTTLAEN (93 aa)) folds into the Fibronectin type-III domain. Residues 771–880 (GGGPDASCTV…TLNGEPCALA (110 aa)) enclose the CBM2 domain.

It belongs to the glycosyl hydrolase 9 (cellulase E) family.

The catalysed reaction is Endohydrolysis of (1-&gt;4)-beta-D-glucosidic linkages in cellulose, lichenin and cereal beta-D-glucans.. It participates in glycan metabolism; cellulose degradation. The polypeptide is Endoglucanase E-4 (celD) (Thermobifida fusca (Thermomonospora fusca)).